The sequence spans 342 residues: Aromatic amino acid aminotransferase (342 aa).

At K214 the chain carries N6-(pyridoxal phosphate)lysine.

Belongs to the class-II pyridoxal-phosphate-dependent aminotransferase family. In terms of assembly, homodimer. The cofactor is pyridoxal 5'-phosphate.

It carries out the reaction an aromatic L-alpha-amino acid + 2-oxoglutarate = an aromatic oxo-acid + L-glutamate. Its function is as follows. Aminotransferase that catalyzes the conversion of aromatic amino acids and 2-oxoglutarate into corresponding aromatic oxo acids and L-glutamate. This is Aromatic amino acid aminotransferase from Corynebacterium efficiens (strain DSM 44549 / YS-314 / AJ 12310 / JCM 11189 / NBRC 100395).